The sequence spans 448 residues: Proton extrusion protein PxcA (448 aa).

4 helical membrane-spanning segments follow: residues 231-251 (ILLLIIIPLLIHQLTKTFFLI), 323-343 (IDSIANIFADLFSFIAFVLVL), 372-392 (LIILFTDMFVGFHSPHGWEVI), and 408-428 (FNFLFIATFPVILDTVLKYWI).

This sequence belongs to the CemA family.

The protein resides in the cell inner membrane. Required for H(+) efflux immediately after light irradiation to form a rapid H(+) concentration gradient across the thylakoid membranes. Together with PxcL, contributes to transient H(+) uptake following dark to light transition. The protein is Proton extrusion protein PxcA of Rippkaea orientalis (strain PCC 8801 / RF-1) (Cyanothece sp. (strain PCC 8801)).